A 274-amino-acid chain; its full sequence is Large ribosomal subunit protein uL2 (274 aa).

The segment at 228–254 (VDHPMGGGEGRASGGHPRSRKGLYAKG) is disordered. Over residues 244–254 (PRSRKGLYAKG) the composition is skewed to basic residues.

This sequence belongs to the universal ribosomal protein uL2 family. Part of the 50S ribosomal subunit. Forms a bridge to the 30S subunit in the 70S ribosome.

In terms of biological role, one of the primary rRNA binding proteins. Required for association of the 30S and 50S subunits to form the 70S ribosome, for tRNA binding and peptide bond formation. It has been suggested to have peptidyltransferase activity; this is somewhat controversial. Makes several contacts with the 16S rRNA in the 70S ribosome. The protein is Large ribosomal subunit protein uL2 of Azobacteroides pseudotrichonymphae genomovar. CFP2.